A 366-amino-acid chain; its full sequence is Histidinol-phosphate aminotransferase (366 aa).

The residue at position 228 (lysine 228) is an N6-(pyridoxal phosphate)lysine.

The protein belongs to the class-II pyridoxal-phosphate-dependent aminotransferase family. Histidinol-phosphate aminotransferase subfamily. In terms of assembly, homodimer. Pyridoxal 5'-phosphate serves as cofactor.

It catalyses the reaction L-histidinol phosphate + 2-oxoglutarate = 3-(imidazol-4-yl)-2-oxopropyl phosphate + L-glutamate. The protein operates within amino-acid biosynthesis; L-histidine biosynthesis; L-histidine from 5-phospho-alpha-D-ribose 1-diphosphate: step 7/9. The protein is Histidinol-phosphate aminotransferase of Corynebacterium glutamicum (strain ATCC 13032 / DSM 20300 / JCM 1318 / BCRC 11384 / CCUG 27702 / LMG 3730 / NBRC 12168 / NCIMB 10025 / NRRL B-2784 / 534).